Reading from the N-terminus, the 547-residue chain is Probable high-affinity hexose transporter ght8, mitochondrial (547 aa).

The transit peptide at 1-21 (MGKTLTIVMLVFVSMAGWMFG) directs the protein to the mitochondrion. At 22–86 (ADTGSIGGIT…SPLMDRIGKR (65 aa)) the chain is on the mitochondrial intermembrane side. The chain crosses the membrane as a helical span at residues 87 to 107 (VSIMFWTIVYLIGIILQVTAV). The Cytoplasmic portion of the chain corresponds to 108–112 (PSWVQ). Residues 113–133 (IMVAKIWTGLAIGALSVLAPG) form a helical membrane-spanning segment. Over 134 to 144 (FQSEVAPATLR) the chain is Mitochondrial intermembrane. Residues 145-165 (GTIVTTYQLAVTGGIFIAACI) traverse the membrane as a helical segment. At 166–179 (NMGTHKLHKTAQWR) the chain is on the cytoplasmic side. Residues 180 to 200 (VSMGINLLWGIIMFIGISFLP) traverse the membrane as a helical segment. The Mitochondrial intermembrane portion of the chain corresponds to 201–304 (ESPRYLIAIG…TGMNSPYLSA (104 aa)). A helical transmembrane segment spans residues 305-325 (LILDAVNFGCTFGGLFVLEFF). Over 326 to 328 (GRR) the chain is Cytoplasmic. Residues 329–349 (MPLIIGGVWQSITFFIYAAVG) traverse the membrane as a helical segment. At 350-363 (NRALTRKNGTSNHR) the chain is on the mitochondrial intermembrane side. Residues 364-384 (AGAVMIVFSCLFIFSFAQTWG) form a helical membrane-spanning segment. Residues 385–404 (PAAYVIVGESYPIRYRSKCA) are Cytoplasmic-facing. Residues 405-425 (AVATTGNWLWGFLITFFTPFI) form a helical membrane-spanning segment. The Mitochondrial intermembrane segment spans residues 426–432 (SDSIGFK). A helical transmembrane segment spans residues 433 to 453 (YGYIFAACNLCAACIIFLFAH). At 454 to 547 (ETKGLTLEEI…NYVDEQDRYA (94 aa)) the chain is on the cytoplasmic side. Residues 482–547 (GQAAKQQQEV…NYVDEQDRYA (66 aa)) are disordered. Positions 517 to 529 (TSSNDITSSTSSS) are enriched in low complexity. Phosphoserine is present on Ser519. A phosphothreonine mark is found at Thr523 and Thr526. 4 positions are modified to phosphoserine: Ser527, Ser528, Ser529, and Ser537.

Belongs to the major facilitator superfamily. Sugar transporter (TC 2.A.1.1) family.

It is found in the mitochondrion membrane. This Schizosaccharomyces pombe (strain 972 / ATCC 24843) (Fission yeast) protein is Probable high-affinity hexose transporter ght8, mitochondrial (ght8).